We begin with the raw amino-acid sequence, 369 residues long: Delta(12)-oleate desaturase (369 aa).

The next 2 helical transmembrane spans lie at 41–61 (LLSDLAFVSLFFYLAIAYFPL) and 69–89 (IAWPLYWIFQGCSLTGVWVIA). Residues 90–94 (HECGH) carry the Histidine box-1 motif. Residues 102-122 (LIDDIVGLFFHSALLVPYFSW) form a helical membrane-spanning segment. The short motif at 126–130 (HRRHH) is the Histidine box-2 element. The next 3 helical transmembrane spans lie at 164–184 (LISLIGTLTLGWPLYLAFNMS), 207–227 (WIQVYISDAGILGMAFMLYRI), and 234–254 (FWVMRIYGIPLVIVNGFLVLI). The Histidine box-3 signature appears at 300-304 (HVVHH).

It belongs to the fatty acid desaturase type 1 family.

It localises to the membrane. It functions in the pathway lipid metabolism; polyunsaturated fatty acid biosynthesis. In terms of biological role, delta(12)-fatty acid desaturase producing in a heterologous system linoleic acid (18:2(9Z,12Z)) and to a lower extent hexadecadienoic acid (16:2(9Z,12Z)). In Trichosanthes kirilowii (Chinese snake gourd), this protein is Delta(12)-oleate desaturase.